Reading from the N-terminus, the 139-residue chain is uncharacterized protein (139 aa).

Residues 8–139 (ANLLDHALTK…FLAIIAKLAQ (132 aa)) form the HTH marR-type domain. The H-T-H motif DNA-binding region spans 53–76 (IKDILKEVTLSPSATTTALNHLEQ).

This is an uncharacterized protein from Bacillus subtilis (strain 168).